The sequence spans 81 residues: Delta-conotoxin-like Ac6.3 (81 aa).

The first 22 residues, Met1 to Ala22, serve as a signal peptide directing secretion. Positions Asp23–Arg51 are excised as a propeptide. Intrachain disulfides connect Cys54–Cys69, Cys61–Cys73, and Cys68–Cys78.

This sequence belongs to the conotoxin O1 superfamily. As to expression, expressed by the venom duct.

Its subcellular location is the secreted. Functionally, delta-conotoxins bind to site 6 of voltage-gated sodium channels (Nav) and inhibit the inactivation process. This is Delta-conotoxin-like Ac6.3 from Conus achatinus (Little frog cone).